The following is a 325-amino-acid chain: Tetraacyldisaccharide 4'-kinase (325 aa).

Thr-55–Thr-62 lines the ATP pocket.

It belongs to the LpxK family.

It catalyses the reaction a lipid A disaccharide + ATP = a lipid IVA + ADP + H(+). It functions in the pathway glycolipid biosynthesis; lipid IV(A) biosynthesis; lipid IV(A) from (3R)-3-hydroxytetradecanoyl-[acyl-carrier-protein] and UDP-N-acetyl-alpha-D-glucosamine: step 6/6. In terms of biological role, transfers the gamma-phosphate of ATP to the 4'-position of a tetraacyldisaccharide 1-phosphate intermediate (termed DS-1-P) to form tetraacyldisaccharide 1,4'-bis-phosphate (lipid IVA). This chain is Tetraacyldisaccharide 4'-kinase, found in Salmonella paratyphi C (strain RKS4594).